Here is a 189-residue protein sequence, read N- to C-terminus: HGPRTase-like protein 2 (189 aa).

The protein belongs to the purine/pyrimidine phosphoribosyltransferase family. Archaeal HPRT subfamily.

In terms of biological role, may catalyze a purine salvage reaction, the substrate is unknown. The polypeptide is HGPRTase-like protein 2 (Halalkalicoccus jeotgali (strain DSM 18796 / CECT 7217 / JCM 14584 / KCTC 4019 / B3)).